A 399-amino-acid polypeptide reads, in one-letter code: Formate-dependent phosphoribosylglycinamide formyltransferase (399 aa).

N(1)-(5-phospho-beta-D-ribosyl)glycinamide-binding positions include 22–23 (EL) and E82. Residues R115, K157, 162 to 167 (SSGKGQ), 197 to 200 (EAVV), and E205 contribute to the ATP site. Residues 120–315 (RLAAEELGLQ…EFELHARAIL (196 aa)) form the ATP-grasp domain. Mg(2+) is bound by residues E274 and E286. N(1)-(5-phospho-beta-D-ribosyl)glycinamide-binding positions include D293, K362, and 369–370 (RR).

This sequence belongs to the PurK/PurT family. In terms of assembly, homodimer.

The enzyme catalyses N(1)-(5-phospho-beta-D-ribosyl)glycinamide + formate + ATP = N(2)-formyl-N(1)-(5-phospho-beta-D-ribosyl)glycinamide + ADP + phosphate + H(+). It participates in purine metabolism; IMP biosynthesis via de novo pathway; N(2)-formyl-N(1)-(5-phospho-D-ribosyl)glycinamide from N(1)-(5-phospho-D-ribosyl)glycinamide (formate route): step 1/1. Involved in the de novo purine biosynthesis. Catalyzes the transfer of formate to 5-phospho-ribosyl-glycinamide (GAR), producing 5-phospho-ribosyl-N-formylglycinamide (FGAR). Formate is provided by PurU via hydrolysis of 10-formyl-tetrahydrofolate. The sequence is that of Formate-dependent phosphoribosylglycinamide formyltransferase from Thioalkalivibrio sulfidiphilus (strain HL-EbGR7).